The primary structure comprises 447 residues: Tubulin beta chain (447 aa).

GTP-binding residues include glutamine 11, glutamate 69, serine 138, glycine 142, threonine 143, glycine 144, asparagine 204, and asparagine 226. Glutamate 69 serves as a coordination point for Mg(2+). Residues 427 to 447 (EAHMDDEEAEEAYEDEAPPEE) form a disordered region. A compositionally biased stretch (acidic residues) spans 430-447 (MDDEEAEEAYEDEAPPEE).

The protein belongs to the tubulin family. As to quaternary structure, dimer of alpha and beta chains. A typical microtubule is a hollow water-filled tube with an outer diameter of 25 nm and an inner diameter of 15 nM. Alpha-beta heterodimers associate head-to-tail to form protofilaments running lengthwise along the microtubule wall with the beta-tubulin subunit facing the microtubule plus end conferring a structural polarity. Microtubules usually have 13 protofilaments but different protofilament numbers can be found in some organisms and specialized cells. Mg(2+) is required as a cofactor.

The protein localises to the cytoplasm. The protein resides in the cytoskeleton. In terms of biological role, tubulin is the major constituent of microtubules, a cylinder consisting of laterally associated linear protofilaments composed of alpha- and beta-tubulin heterodimers. Microtubules grow by the addition of GTP-tubulin dimers to the microtubule end, where a stabilizing cap forms. Below the cap, tubulin dimers are in GDP-bound state, owing to GTPase activity of alpha-tubulin. The polypeptide is Tubulin beta chain (TBB1) (Uromyces fabae (Rust fungus)).